The sequence spans 578 residues: Kelch-like protein 30 (578 aa).

The BTB domain maps to 33 to 100 (ADVTLLVGGR…VYTGRLTITQ (68 aa)). A BACK domain is found at 153-255 (KAWAFLRENF…EACRAALSQG (103 aa)). 6 Kelch repeats span residues 270 to 326 (VLVV…ALNN), 327 to 377 (NIYV…ALNG), 378 to 422 (EIYV…GCRG), 424 to 471 (LYLV…ALHG), 473 to 513 (LYLI…PLGD), and 514 to 563 (ALYV…TVFL).

In Homo sapiens (Human), this protein is Kelch-like protein 30 (KLHL30).